The primary structure comprises 361 residues: Peptide chain release factor 1 (361 aa).

N5-methylglutamine is present on glutamine 235. The segment at 288 to 307 (AARSADRKDQVGSGDRSERI) is disordered.

This sequence belongs to the prokaryotic/mitochondrial release factor family. Methylated by PrmC. Methylation increases the termination efficiency of RF1.

It localises to the cytoplasm. In terms of biological role, peptide chain release factor 1 directs the termination of translation in response to the peptide chain termination codons UAG and UAA. The chain is Peptide chain release factor 1 from Nitrobacter hamburgensis (strain DSM 10229 / NCIMB 13809 / X14).